A 483-amino-acid polypeptide reads, in one-letter code: Probable cobyric acid synthase (483 aa).

Positions 247–433 (ELHIQIIKLP…LHGIFHNFAF (187 aa)) constitute a GATase cobBQ-type domain. Residue cysteine 325 is the Nucleophile of the active site. The active site involves histidine 425.

Belongs to the CobB/CobQ family. CobQ subfamily.

The protein operates within cofactor biosynthesis; adenosylcobalamin biosynthesis. Catalyzes amidations at positions B, D, E, and G on adenosylcobyrinic A,C-diamide. NH(2) groups are provided by glutamine, and one molecule of ATP is hydrogenolyzed for each amidation. The protein is Probable cobyric acid synthase of Thermococcus gammatolerans (strain DSM 15229 / JCM 11827 / EJ3).